A 522-amino-acid chain; its full sequence is Occludin (522 aa).

Residues 1-20 (MSSRPLESPPPYRPDEFKPN) form a disordered region. Over 1-66 (MSSRPLESPP…KWTSPPGVIR (66 aa)) the chain is Cytoplasmic. The MARVEL domain occupies 60-269 (SPPGVIRILS…IIFFAVKTRR (210 aa)). Residues 67–89 (ILSMLIIVMCIAIFACVASTLAW) traverse the membrane as a helical segment. Residues 90 to 135 (DRGYGTSLLGGSVGYPYGGSGFGSYGSGYGYGYGYGYGYGGYTDPR) lie on the Extracellular side of the membrane. The chain crosses the membrane as a helical span at residues 136 to 160 (AAKGFMLAMAAFCFIAALVIFVTSV). Residues 161–170 (IRSEMSRTRR) lie on the Cytoplasmic side of the membrane. Residues 171–195 (YYLSVIIVSAILGIMVFIATIVYIM) form a helical membrane-spanning segment. At 196 to 243 (GVNPTAQSSGSLYGSQIYALCNQFYTPAATGLYVDQYLYHYCVVDPQE) the chain is on the extracellular side. Residues Cys216 and Cys237 are joined by a disulfide bond. The chain crosses the membrane as a helical span at residues 244–265 (AIAIVLGFMIIVAFALIIFFAV). Residues 266 to 522 (KTRRKMDRYD…MVGDYDRQKT (257 aa)) lie on the Cytoplasmic side of the membrane. Ser302 is modified (phosphoserine). The residue at position 305 (Thr305) is a Phosphothreonine. Phosphoserine is present on residues Ser313, Ser321, and Ser340. The interval 360 to 407 (VDDFRQPRYSSGGNFETPSKRAPAKGRAGRSKRTEQDHYETDYTTGGE) is disordered. Over residues 367–376 (RYSSGGNFET) the composition is skewed to polar residues. At Tyr368 the chain carries Phosphotyrosine. Phosphoserine is present on residues Ser369 and Ser370. Residues 381–390 (APAKGRAGRS) show a composition bias toward basic residues. Basic and acidic residues predominate over residues 391–400 (KRTEQDHYET). Phosphotyrosine occurs at positions 398 and 402. 2 positions are modified to phosphothreonine; by PKC/PRKCH: Thr403 and Thr404. Ser408 bears the Phosphoserine mark. The OCEL domain occupies 414–522 (EDWIREYPPI…MVGDYDRQKT (109 aa)). Residues 426 to 489 (DQQRQLYKRN…EYNRLKQVKG (64 aa)) adopt a coiled-coil conformation. Phosphoserine is present on Ser490.

It belongs to the ELL/occludin family. In terms of assembly, interacts with TJP1/ZO1. Interacts with VAPA. Interacts with CLDN1, CLDN6, CLDN9, CLDN11, CLDN12 and CLDN17. Interacts with PLSCR1. Interacts with LSR, ILDR1 and ILDR2. Interacts with TJP2/ZO2. Post-translationally, dephosphorylated by PTPRJ. The tyrosine phosphorylation on Tyr-398 and Tyr-402 reduces its ability to interact with TJP1. Phosphorylation at Ser-490 also attenuates the interaction with TJP1. (Microbial infection) Cleaved by S.pyogenes SpeB protease; leading to its degradation. Degradation by SpeB promotes bacterial translocation across the host epithelial barrier. Localized at tight junctions of both epithelial and endothelial cells. Highly expressed in kidney. Not detected in testis.

The protein localises to the cell membrane. It localises to the cell junction. The protein resides in the tight junction. In terms of biological role, may play a role in the formation and regulation of the tight junction (TJ) paracellular permeability barrier. It is able to induce adhesion when expressed in cells lacking tight junctions. (Microbial infection) Acts as a coreceptor for hepatitis C virus (HCV) in hepatocytes. This Homo sapiens (Human) protein is Occludin (OCLN).